Here is a 398-residue protein sequence, read N- to C-terminus: Endoglucanase (398 aa).

Residues 1 to 23 (MSPLKCMALAALGAVMFVGSAQA) form the signal peptide. Residue Glu58 is the Proton donor of the active site. Asp119 serves as the catalytic Nucleophile.

This sequence belongs to the glycosyl hydrolase 8 (cellulase D) family.

Its subcellular location is the secreted. It catalyses the reaction Endohydrolysis of (1-&gt;4)-beta-D-glucosidic linkages in cellulose, lichenin and cereal beta-D-glucans.. The protein operates within glycan metabolism; bacterial cellulose biosynthesis. Its function is as follows. Hydrolyzes carboxymethylcellulose. This chain is Endoglucanase (bcsZ), found in Pseudomonas fluorescens (strain SBW25).